The primary structure comprises 529 residues: Bifunctional purine biosynthesis protein PurH (529 aa).

Residues 1 to 148 (MQQRRPVRRA…KNHKDVAIVV (148 aa)) enclose the MGS-like domain. The residue at position 287 (lysine 287) is an N6-acetyllysine.

This sequence belongs to the PurH family.

It carries out the reaction (6R)-10-formyltetrahydrofolate + 5-amino-1-(5-phospho-beta-D-ribosyl)imidazole-4-carboxamide = 5-formamido-1-(5-phospho-D-ribosyl)imidazole-4-carboxamide + (6S)-5,6,7,8-tetrahydrofolate. It catalyses the reaction IMP + H2O = 5-formamido-1-(5-phospho-D-ribosyl)imidazole-4-carboxamide. The protein operates within purine metabolism; IMP biosynthesis via de novo pathway; 5-formamido-1-(5-phospho-D-ribosyl)imidazole-4-carboxamide from 5-amino-1-(5-phospho-D-ribosyl)imidazole-4-carboxamide (10-formyl THF route): step 1/1. It participates in purine metabolism; IMP biosynthesis via de novo pathway; IMP from 5-formamido-1-(5-phospho-D-ribosyl)imidazole-4-carboxamide: step 1/1. In Escherichia coli O45:K1 (strain S88 / ExPEC), this protein is Bifunctional purine biosynthesis protein PurH.